The primary structure comprises 85 residues: Cell division topological specificity factor (85 aa).

The protein belongs to the MinE family.

Functionally, prevents the cell division inhibition by proteins MinC and MinD at internal division sites while permitting inhibition at polar sites. This ensures cell division at the proper site by restricting the formation of a division septum at the midpoint of the long axis of the cell. In Stutzerimonas stutzeri (strain A1501) (Pseudomonas stutzeri), this protein is Cell division topological specificity factor.